The sequence spans 58 residues: Large ribosomal subunit protein uL30 (58 aa).

The protein belongs to the universal ribosomal protein uL30 family. In terms of assembly, part of the 50S ribosomal subunit.

This Psychromonas ingrahamii (strain DSM 17664 / CCUG 51855 / 37) protein is Large ribosomal subunit protein uL30.